We begin with the raw amino-acid sequence, 85 residues long: YcgL domain-containing protein PC1_1941 (85 aa).

The YcgL domain occupies 1 to 85 (MFCVIYRSAK…PVENLLNTPV (85 aa)).

The sequence is that of YcgL domain-containing protein PC1_1941 from Pectobacterium carotovorum subsp. carotovorum (strain PC1).